We begin with the raw amino-acid sequence, 229 residues long: Putative germin-like protein 12-3 (229 aa).

Positions 1–22 (MASSNFFLLIPLIALVTTQAMA) are cleaved as a signal peptide. A disulfide bridge links cysteine 32 with cysteine 47. The Cupin type-1 domain occupies 62–217 (ANLDKPMDIT…AFQVDKKAVD (156 aa)). N-linked (GlcNAc...) asparagine glycosylation is present at asparagine 78. 4 residues coordinate Mn(2+): histidine 111, histidine 113, glutamate 118, and histidine 162.

It belongs to the germin family. Oligomer (believed to be a pentamer but probably hexamer).

The protein localises to the secreted. It is found in the extracellular space. The protein resides in the apoplast. Functionally, may play a role in plant defense. Probably has no oxalate oxidase activity even if the active site is conserved. This chain is Putative germin-like protein 12-3, found in Oryza sativa subsp. japonica (Rice).